The sequence spans 236 residues: Probable transmembrane ascorbate ferrireductase 4 (236 aa).

The region spanning 14 to 210 (FARLSGLVVA…LGCIVITAAI (197 aa)) is the Cytochrome b561 domain. Transmembrane regions (helical) follow at residues 17–37 (LSGLVVAVSVLYWALFLPNLG), 42–62 (TLHPLLMVIGFILVSGEAILI), and 76–96 (VHLWLQGMALASAVFGIWTKF). Residues His44, His77, and His110 each coordinate heme b. The next 3 helical transmembrane spans lie at 112–132 (WMGLLSVSLFAAQWVTGFMSF), 144–164 (TFLPWHVFLGLYTYGLAIATA), and 191–211 (VNGLGLGLALLGCIVITAAIL). His149 lines the heme b pocket.

Homodimer. Requires heme b as cofactor.

The protein resides in the membrane. It catalyses the reaction Fe(3+)(out) + L-ascorbate(in) = monodehydro-L-ascorbate radical(in) + Fe(2+)(out) + H(+). In terms of biological role, two-heme-containing cytochrome. May catalyze ascorbate-dependent trans-membrane ferric-chelate reduction. The polypeptide is Probable transmembrane ascorbate ferrireductase 4 (CYB561D) (Arabidopsis thaliana (Mouse-ear cress)).